Here is a 78-residue protein sequence, read N- to C-terminus: Ferredoxin 7Fe (78 aa).

2 4Fe-4S ferredoxin-type domains span residues 2–29 and 31–60; these read AYVI…IHEG and DQYY…HEDF. Positions 9 and 17 each coordinate [3Fe-4S] cluster. [4Fe-4S] cluster contacts are provided by Cys21, Cys40, Cys43, and Cys46. Cys50 contributes to the [3Fe-4S] cluster binding site.

As to quaternary structure, monomer. It depends on [4Fe-4S] cluster as a cofactor. Requires [3Fe-4S] cluster as cofactor.

The polypeptide is Ferredoxin 7Fe (fdxA) (Hydrogenibacillus schlegelii (Bacillus schlegelii)).